The chain runs to 503 residues: Puromycin resistance protein pur8 (503 aa).

At 1-24 (MARKPDISAVPVESAACQGPDPRR) the chain is on the cytoplasmic side. The helical transmembrane segment at 25–45 (WWGLVVILAAQLLVVLDGTVV) threads the bilayer. Residues 46 to 64 (NIALPSVQRDLGMSDTSRQ) are Extracellular-facing. A helical membrane pass occupies residues 65-85 (WVITAYTLAFGGLLLLGGRVA). Topologically, residues 86 to 92 (DAFGRRR) are cytoplasmic. Residues 93 to 113 (IFAVGILGFGLASLLGGAAPD) traverse the membrane as a helical segment. Topologically, residues 114 to 122 (PGTLFLARA) are extracellular. The helical transmembrane segment at 123–143 (LQGVFAAALAPAALALINTLF) threads the bilayer. Over 144 to 152 (TEPGERGKA) the chain is Cytoplasmic. A helical membrane pass occupies residues 153–173 (FGVYGAVSGGGAAVGLLAGGL). The Extracellular portion of the chain corresponds to 174–181 (LTEYLDWR). Residues 182 to 202 (WCLYVNAPVALLALLGCRLLP) form a helical membrane-spanning segment. Residues 203-212 (RDRRTGRAVR) lie on the Cytoplasmic side of the membrane. A helical membrane pass occupies residues 213–233 (LDLPGTLLGCGGLVAIVYAFA). At 234-241 (EAESGWGD) the chain is on the extracellular side. Residues 242 to 262 (PLVVRLLVLGVLMLVAFALVE) form a helical membrane-spanning segment. The Cytoplasmic portion of the chain corresponds to 263–280 (RRVQDPLLPPGVVAHRVR). A helical membrane pass occupies residues 281–301 (GGSFLVVGLPQIGLFGLFLFL). Topologically, residues 302 to 313 (TYYLQGILDYSP) are extracellular. A helical transmembrane segment spans residues 314 to 334 (VLTGVAFLPLGLGIAVGSSLI). Over 335-346 (AARLLPRTRPRT) the chain is Cytoplasmic. Residues 347-367 (LIVGALLAAAAGMALLTRLEP) traverse the membrane as a helical segment. Residues 368-371 (DTPQ) lie on the Extracellular side of the membrane. The chain crosses the membrane as a helical span at residues 372–392 (VYLTHLLPAQILIGLGIGCMM). Residues 393 to 422 (MPAMHTATARVAPHEAGAAAAVVNSAQQVG) are Cytoplasmic-facing. Residues 423–443 (GALGVALLNTVSTGATAAYLA) form a helical membrane-spanning segment. Residues 444–461 (DHGTSPAATVDGTVHGYT) are Extracellular-facing. The chain crosses the membrane as a helical span at residues 462–482 (VAIAFAVGVLLLTAVLAWVLI). The Cytoplasmic portion of the chain corresponds to 483–503 (DSRTEAADETGSASVTPARPR).

It belongs to the major facilitator superfamily. EmrB family.

Its subcellular location is the cell membrane. In terms of biological role, may be involved in active puromycin efflux energized by a proton-dependent electrochemical gradient. In addition, it could be implicated in secreting N-acetylpuromycin, the last intermediate of the puromycin biosynthesis pathway, to the environment. The polypeptide is Puromycin resistance protein pur8 (pur8) (Streptomyces alboniger).